A 607-amino-acid polypeptide reads, in one-letter code: MCGIVGIVGHSQVAPLIVDALKRLEYRGYDSAGVATIEHGELARRRAEGKLINLERRLKEEPLDGTIGIGHTRWATHGVPNETNAHPHFSDGVAIVHNGIIENFAELRDELVRDGYAFSSQTDTEVVAHLVARELAKGLKPVEAAHQALKRLEGAFALAIMFKGDEDLIVGARNGPPLAVGHGDGEMFLGSDAIALAPFTNSITYLEDGDWAVVRRDSVAIFDIDGKKVERKRQQSLSTSFMVDKGNRRHFMEKEIHEQPEVISHTLAHYVDFVSGVSKPLDLPFDFAKIGRLAISACGTAYLAGLIGKYWFERYARLPVDIDVASEFRYREMPLSANDAAFFISQSGETADTLASLRYCRKAGMKIGAVVNVRESTMARESDVVLPTLAGPEIGVASTKAFTCQLSVLASLAVRAGVARGVISQEQEKTLVRALSEAPRYANQVLKLEEQIERIARELSRYKDVLYLGRDTNFPLAMEGALKLKEISYIHAEGYAAGELKHGPIALIDENMPVIVIAPHDRIFEKTVSNMQEVAARGGKIILITDSKGAAQVSVKTMETIILPDVPEIISPIIYALPIQMLAYFAAVFMGTDVDQPRNLAKSVTVE.

Residue Cys2 is the Nucleophile; for GATase activity of the active site. Positions 2 to 217 (CGIVGIVGHS…DGDWAVVRRD (216 aa)) constitute a Glutamine amidotransferase type-2 domain. SIS domains are found at residues 283 to 422 (LPFD…ARGV) and 455 to 597 (IARE…VDQP). Catalysis depends on Lys602, which acts as the For Fru-6P isomerization activity.

In terms of assembly, homodimer.

Its subcellular location is the cytoplasm. It carries out the reaction D-fructose 6-phosphate + L-glutamine = D-glucosamine 6-phosphate + L-glutamate. In terms of biological role, catalyzes the first step in hexosamine metabolism, converting fructose-6P into glucosamine-6P using glutamine as a nitrogen source. This Mesorhizobium japonicum (strain LMG 29417 / CECT 9101 / MAFF 303099) (Mesorhizobium loti (strain MAFF 303099)) protein is Glutamine--fructose-6-phosphate aminotransferase [isomerizing].